The sequence spans 794 residues: Protein IQ-DOMAIN 32 (794 aa).

The interval 15 to 101 is disordered; sequence CSGGDDTSAD…QSFSVDEKKS (87 aa). Composition is skewed to polar residues over residues 23–33 and 56–65; these read ADPNSTALENK and SVVSETTPAS. Phosphoserine occurs at positions 78, 80, 142, 193, and 195. A compositionally biased stretch (polar residues) spans 80 to 95; the sequence is SPDNNNVSEKQQQSFS. 2 IQ domains span residues 214 to 242 and 243 to 265; these read DESV…KVIK and LQAA…CVQA. The calmodulin-binding stretch occupies residues 230–241; it reads ARRELLRSKKVI. The disordered stretch occupies residues 277–296; the sequence is HSTKDGSRVSATSDKSEPNA. Ser-369 is subject to Phosphoserine. The disordered stretch occupies residues 375-417; sequence VNSDSTVENKTETDMPSYEASKVEGQNVELSETEKMSQYDSPE. Ser-459 is subject to Phosphoserine. Disordered stretches follow at residues 472 to 555 and 578 to 794; these read ELTS…RVEA and ATSM…KWQR. Residues 473-486 are compositionally biased toward polar residues; it reads LTSSTGSNKAMTLS. Positions 487 to 500 are enriched in basic and acidic residues; that stretch reads SKDDVLGEEGKTDI. Ser-502 and Ser-544 each carry phosphoserine. Basic and acidic residues-rich tracts occupy residues 539 to 555 and 585 to 607; these read TLEK…RVEA and EDPK…HHEP. A compositionally biased stretch (low complexity) spans 643-654; that stretch reads SQATPASQASSS. Residues 657–664 carry the Nuclear localization signal motif; it reads ARKGKSEK. A compositionally biased stretch (polar residues) spans 768-786; the sequence is NGKQVSPRIQRSASQAQQG.

This sequence belongs to the IQD family. As to quaternary structure, binds to multiple calmodulin (CaM) in the presence of Ca(2+) and CaM-like proteins.

The protein resides in the nucleus. It localises to the cytoplasm. The protein localises to the cytoskeleton. In terms of biological role, may be involved in cooperative interactions with calmodulins or calmodulin-like proteins. Recruits calmodulin proteins to microtubules, thus being a potential scaffold in cellular signaling and trafficking. May associate with nucleic acids and regulate gene expression at the transcriptional or post-transcriptional level. In Arabidopsis thaliana (Mouse-ear cress), this protein is Protein IQ-DOMAIN 32.